We begin with the raw amino-acid sequence, 389 residues long: D-alanine--D-alanine ligase (389 aa).

Positions 1–12 are enriched in polar residues; the sequence is MSTENLPQNPEQ. The segment at 1-22 is disordered; sequence MSTENLPQNPEQSPRRPPRKPR. One can recognise an ATP-grasp domain in the interval 169 to 379; the sequence is KAVFTSYGLK…YPELVDRLVQ (211 aa). 205–260 contributes to the ATP binding site; it reads AGEHGWPLFVKPARAGSSIGITKVDDLAGLDEAIEEARRHDPKILVEAALRGREIE. Residues Asp-333, Glu-346, and Asn-348 each contribute to the Mg(2+) site.

It belongs to the D-alanine--D-alanine ligase family. Mg(2+) serves as cofactor. Mn(2+) is required as a cofactor.

It localises to the cytoplasm. The enzyme catalyses 2 D-alanine + ATP = D-alanyl-D-alanine + ADP + phosphate + H(+). The protein operates within cell wall biogenesis; peptidoglycan biosynthesis. Functionally, cell wall formation. This chain is D-alanine--D-alanine ligase (ddl), found in Streptomyces coelicolor (strain ATCC BAA-471 / A3(2) / M145).